The chain runs to 783 residues: Cilia- and flagella-associated protein 91 (783 aa).

Residues 748–760 (EDFELEEEAESLD) are compositionally biased toward acidic residues. A disordered region spans residues 748–783 (EDFELEEEAESLDSEVPTVSVSKTSTIKPTQDEGEG). Over residues 764 to 776 (PTVSVSKTSTIKP) the composition is skewed to polar residues.

It belongs to the CFAP91 family. Part of a complex containing MYCBP, AKAP1 and PRKAR2B. Interacts with MYCBP and AKAP1. Interacts with CFAP61. In terms of processing, phosphorylated by PKA. As to expression, expressed in the testis, in cells involved in spermatogenesis.

The protein resides in the cytoplasm. It is found in the mitochondrion. It localises to the cytoskeleton. Its subcellular location is the cilium axoneme. In terms of biological role, involved in sperm flagellum axonemal organization and function. May regulate cilium motility through its role in the assembly of the axonemal radial spokes. The sequence is that of Cilia- and flagella-associated protein 91 from Mus musculus (Mouse).